The chain runs to 455 residues: MAPPLLLCLILTFLWNLPEAESNVFLKSKVANRFLQRTKRSNSIFEEFKAGNIERECIEEKCSKEEAREVFEDNEKTETFWNVYVDGDQCSSNPCHYRGTCKDGIGSYTCTCLPNYEGKNCEKVLFESCRVFNGNCWHFCKSVQNEIQCSCAESYRLGDDGHSCVAEGDFSCGRNIKARNKREASLPDFVQSQKAILLKKSDNPSPDIRIINGMDCKLGECPWQAVLLDEDDDVFCGGTILSSIHVLTAAHCINQTKNISVIVGEIDISRKETIRLLPVDKVYVHTKFVPPSYLYGHQNVDRKTYDYDIAIIRMKTPIQFSENVVPACLPTADFVKQVLMKQDFGIVSGFGRTQYRGQTSNTLKVITVPYVDRRTCMLSSDFPITPNMFCAGYDTLPQDACQGDSGGPHITAYGDTHFITGINSWGEGCAKKGKYGVYTKVSNFIPWIKAIMSLK.

Positions 1–20 are cleaved as a signal peptide; sequence MAPPLLLCLILTFLWNLPEA. Residues 21–40 constitute a propeptide that is removed on maturation; it reads ESNVFLKSKVANRFLQRTKR. The 46-residue stretch at 41 to 86 folds into the Gla domain; the sequence is SNSIFEEFKAGNIERECIEEKCSKEEAREVFEDNEKTETFWNVYVD. 4-carboxyglutamate is present on residues glutamate 46, glutamate 47, glutamate 54, glutamate 56, glutamate 59, glutamate 60, glutamate 65, glutamate 66, glutamate 69, glutamate 72, and glutamate 75. An intrachain disulfide couples cysteine 57 to cysteine 62. The EGF-like 1; calcium-binding domain occupies 86 to 122; it reads DGDQCSSNPCHYRGTCKDGIGSYTCTCLPNYEGKNCE. Cystine bridges form between cysteine 90–cysteine 101, cysteine 95–cysteine 110, cysteine 112–cysteine 121, cysteine 129–cysteine 140, cysteine 136–cysteine 149, cysteine 151–cysteine 164, cysteine 172–cysteine 328, cysteine 216–cysteine 221, cysteine 236–cysteine 252, cysteine 376–cysteine 390, and cysteine 401–cysteine 429. O-linked (Hex...) serine glycosylation occurs at serine 92. Residues 129 to 164 form the EGF-like 2 domain; the sequence is CRVFNGNCWHFCKSVQNEIQCSCAESYRLGDDGHSC. Positions 182–209 are cleaved as a propeptide — activation peptide; the sequence is REASLPDFVQSQKAILLKKSDNPSPDIR. One can recognise a Peptidase S1 domain in the interval 210–453; the sequence is IINGMDCKLG…FIPWIKAIMS (244 aa). The active-site Charge relay system is histidine 251. Asparagine 254 is a glycosylation site (N-linked (GlcNAc...) asparagine). Aspartate 308 acts as the Charge relay system in catalysis. The Charge relay system role is filled by serine 405.

Belongs to the peptidase S1 family. Snake venom subfamily. Heterodimer of a light chain and a heavy chain; disulfide-linked. In terms of processing, the vitamin K-dependent, enzymatic carboxylation of some glutamate residues allows the modified protein to bind calcium. As to expression, expressed by the venom gland.

The protein localises to the secreted. The catalysed reaction is Selective cleavage of Arg-|-Thr and then Arg-|-Ile bonds in prothrombin to form thrombin.. Snake prothrombin activator that attacks the hemostatic system of prey. This protein is functionally similar to blood coagulation factor Xa. This chain is Venom prothrombin activator nigrarin-D, found in Cryptophis nigrescens (Eastern small-eyed snake).